Consider the following 1138-residue polypeptide: Solute carrier family 12 member 5 (1138 aa).

Disordered stretches follow at residues 1 to 62 and 96 to 116; these read MSRR…KGRE and QGSR…KPVQ. Residues 1–98 lie on the Cytoplasmic side of the membrane; it reads MSRRFTVTSL…ANYTNLPQGS (98 aa). Residues 21 to 45 are compositionally biased toward basic and acidic residues; it reads PESRRHSVADPRRLPREDVKGDGNP. Residues 46–55 show a composition bias toward polar residues; sequence KESSPFINST. Thr57 carries the post-translational modification Phosphothreonine. Residues 98 to 111 are compositionally biased toward basic and acidic residues; that stretch reads SREHEEAENNEGGK. A discontinuously helical transmembrane segment spans residues 99–120; it reads REHEEAENNEGGKKKPVQAPRM. Lys113 contributes to the K(+) binding site. The Extracellular portion of the chain corresponds to 121-129; the sequence is GTFMGVYLP. Residues 130–151 traverse the membrane as a helical segment; sequence CLQNIFGVILFLRLTWVVGIAG. At 152–174 the chain is on the cytoplasmic side; that stretch reads IMESFCMVFICCSCTMLTAISMS. Residues 175 to 203 traverse the membrane as a helical segment; sequence AIATNGVVPAGGSYYMISRSLGPEFGGAV. Ala184 is a binding site for chloride. Residues 204–229 lie on the Extracellular side of the membrane; sequence GLCFYLGTTFAGAMYILGTIEILLAY. Transmembrane regions (helical) follow at residues 230-250 and 251-276; these read LFPA…AAML and NNMR…KYVN. Over 277 to 402 the chain is Extracellular; that stretch reads KFALVFLGCV…ERRGMPSVGL (126 aa). A disulfide bridge links Cys310 with Cys325. 4 N-linked (GlcNAc...) asparagine glycosylation sites follow: Asn314, Asn333, Asn351, and Asn362. Cysteines 345 and 354 form a disulfide. A helical membrane pass occupies residues 403–420; sequence ADGTPVDMDHPYVFSDMT. A K(+)-binding site is contributed by Met410. Chloride contacts are provided by Tyr414 and Val415. Over 421–429 the chain is Cytoplasmic; sequence SYFTLLVGI. A helical transmembrane segment spans residues 430–453; it reads YFPSVTGIMAGSNRSGDLRDAQKS. A K(+)-binding site is contributed by Asp446. At 454–485 the chain is on the extracellular side; the sequence is IPTGTILAIATTSAVYISSVVLFGACIEGVVL. Residues 486 to 513 traverse the membrane as a helical segment; sequence RDKFGEAVNGNLVVGTLAWPSPWVIVIG. The Cytoplasmic portion of the chain corresponds to 514–534; sequence SFFSTCGAGLQSLTGAPRLLQ. The next 2 membrane-spanning stretches (helical) occupy residues 535-555 and 556-578; these read AISR…KANG and EPTW…ASLD. Glu569 contacts chloride. Residues 579-592 are Cytoplasmic-facing; sequence EVAPILSMFFLMCY. Helical transmembrane passes span 593-615 and 616-632; these read MFVN…PRFR and YYHW…CLAL. Topologically, residues 633–1138 are cytoplasmic; that stretch reads MFICSWYYAL…GGREVITIYS (506 aa). Residues 667-681 are scissor helix; that stretch reads GIRGLSLSAARYALL. Residue Thr929 is modified to Phosphothreonine; by OXSR1 and STK39. Residues 943–1051 form a disordered region; sequence HLTKNERERE…GPSPVSSEGI (109 aa). The segment covering 945 to 962 has biased composition (basic and acidic residues); the sequence is TKNEREREIQSITDESRG. A compositionally biased stretch (acidic residues) spans 982–994; sequence TACDNEEKPEEEV. The span at 1001-1012 shows a compositional bias: low complexity; sequence SAPSCPSSSPSP. The span at 1019 to 1041 shows a compositional bias: basic and acidic residues; sequence ERETDPEVHLTWTKDKSVAEKNK. Thr1029 bears the Phosphothreonine; by OXSR1 and STK39 mark. 3 positions are modified to phosphoserine: Ser1044, Ser1047, and Ser1048.

Belongs to the SLC12A transporter family. K/Cl co-transporter subfamily. As to quaternary structure, homodimer; adopts a domain-swap conformation at the scissor helices connecting the transmembrane domain and C-terminal domain. Heterodimer with K-Cl cotransporters SLC12A6 and SLC12A7. Interacts with AP2A1. In terms of processing, phosphorylated at Thr-929 and Thr-1029 by OXSR1/OSR1 and STK39/SPAK downstream of WNK kinases (WNK1, WNK2, WNK3 or WNK4), inhibiting the potassium-chloride cotransport activity. As to expression, expressed in brainstem, spinal cord and olfactory bulb of 17 dpc embryos. Expressed in all parts of the brain and spinal cord in postnatal day 14 mice. In terms of tissue distribution, expressed in brainstem and spinal cord of 17 dpc embryos. Expressed in all parts of the brain and spinal cord in postnatal day 14 mice.

It is found in the cell membrane. The protein resides in the cell projection. Its subcellular location is the dendrite. It carries out the reaction K(+)(in) + chloride(in) = K(+)(out) + chloride(out). Its activity is regulated as follows. Inhibited following phosphorylation by OXSR1/OSR1 and STK39/SPAK: phosphorylation takes place downstream of WNK kinases (WNK1, WNK2, WNK3 or WNK4) in response to hyperosmotic stress and subsequent cell shrinkage. Functionally, mediates electroneutral potassium-chloride cotransport in mature neurons and is required for neuronal Cl(-) homeostasis. As major extruder of intracellular chloride, it establishes the low neuronal Cl(-) levels required for chloride influx after binding of GABA-A and glycine to their receptors, with subsequent hyperpolarization and neuronal inhibition. Involved in the regulation of dendritic spine formation and maturation. This chain is Solute carrier family 12 member 5 (Slc12a5), found in Mus musculus (Mouse).